A 290-amino-acid polypeptide reads, in one-letter code: Acetyl-coenzyme A carboxylase carboxyl transferase subunit beta (290 aa).

The CoA carboxyltransferase N-terminal domain maps to 27 to 290; the sequence is LWHKCPSCEA…FTHSPSPVSA (264 aa). Zn(2+) contacts are provided by Cys31, Cys34, Cys50, and Cys53. A C4-type zinc finger spans residues 31–53; the sequence is CPSCEAVLYRPELEKTLDVCPKC.

The protein belongs to the AccD/PCCB family. Acetyl-CoA carboxylase is a heterohexamer composed of biotin carboxyl carrier protein (AccB), biotin carboxylase (AccC) and two subunits each of ACCase subunit alpha (AccA) and ACCase subunit beta (AccD). The cofactor is Zn(2+).

It localises to the cytoplasm. The catalysed reaction is N(6)-carboxybiotinyl-L-lysyl-[protein] + acetyl-CoA = N(6)-biotinyl-L-lysyl-[protein] + malonyl-CoA. The protein operates within lipid metabolism; malonyl-CoA biosynthesis; malonyl-CoA from acetyl-CoA: step 1/1. Component of the acetyl coenzyme A carboxylase (ACC) complex. Biotin carboxylase (BC) catalyzes the carboxylation of biotin on its carrier protein (BCCP) and then the CO(2) group is transferred by the transcarboxylase to acetyl-CoA to form malonyl-CoA. In Pseudomonas aeruginosa (strain UCBPP-PA14), this protein is Acetyl-coenzyme A carboxylase carboxyl transferase subunit beta.